We begin with the raw amino-acid sequence, 586 residues long: Asparagine synthetase [glutamine-hydrolyzing] 1 (586 aa).

The active-site For GATase activity is Cys-2. One can recognise a Glutamine amidotransferase type-2 domain in the interval 2–185 (CGILAVLGCS…PGHLYSSRER (184 aa)). L-glutamine is bound by residues 50–54 (RLAIV), 75–77 (NGE), and Asp-98. The 324-residue stretch at 193-516 (PTWFSESIPS…PQNSARLTVP (324 aa)) folds into the Asparagine synthetase domain. ATP-binding positions include Leu-231, Val-267, and 341–342 (SG).

The catalysed reaction is L-aspartate + L-glutamine + ATP + H2O = L-asparagine + L-glutamate + AMP + diphosphate + H(+). Its pathway is amino-acid biosynthesis; L-asparagine biosynthesis; L-asparagine from L-aspartate (L-Gln route): step 1/1. The sequence is that of Asparagine synthetase [glutamine-hydrolyzing] 1 (AS1) from Lotus japonicus (Lotus corniculatus var. japonicus).